The following is a 412-amino-acid chain: MDGDIRKNSLDDGSMDALTGEQSIRNFNINFGPQHPAAHGLLRMVLELDGEIVERADPHIGLLHRGTEKLMESRTYLQNLPYLDRLDYVAPMNQEHAWCLAIERLTGTVIPRRASLIRVLYSEIGRILNHLMGVTTGAMDVGALTPPLWGFEAREELMIFYERACGARLHAAYFRPGGVHQDLPPDLLDDIEEWCERFPKLVDDLDTLLTENRIFKQRLVDIGIVTEADALDWGYTGVMVRGSGLAWDLRRSQPYECYDEFDFQIPVGRNGDCYDRYLCRMAEMRESCKIMQQAVQKLRAEPAGDVLARGKLTPPRRAEMKRDMESLIHHFKLYTEGFKVPAGEVYAAVEGPKGEFGVYLVADGTNKPWRAKLRAPGFAHLQSIDWMSRGHMLADVPAIIATLDIVFGEVDR.

It belongs to the complex I 49 kDa subunit family. In terms of assembly, NDH-1 is composed of at least 14 different subunits, Nqo1 to Nqo14. The complex has a L-shaped structure, with the hydrophobic arm (subunits Nqo7, Nqo8, Nqo10 to Nqo14) embedded in the inner membrane and the hydrophilic peripheral arm (subunits Nqo1 to Nqo6, Nqo9) protruding into the bacterial cytoplasm. The hydrophilic domain contains all the redox centers.

Its subcellular location is the cell inner membrane. It catalyses the reaction a quinone + NADH + 5 H(+)(in) = a quinol + NAD(+) + 4 H(+)(out). In terms of biological role, NDH-1 shuttles electrons from NADH, via FMN and iron-sulfur (Fe-S) centers, to quinones in the respiratory chain. The immediate electron acceptor for the enzyme in this species is believed to be ubiquinone. Couples the redox reaction to proton translocation (for every two electrons transferred, four hydrogen ions are translocated across the cytoplasmic membrane), and thus conserves the redox energy in a proton gradient. The protein is NADH-quinone oxidoreductase subunit 4 (nqo4) of Paracoccus denitrificans.